Consider the following 196-residue polypeptide: Large ribosomal subunit protein uL14my (196 aa).

The N-terminal 62 residues, 1-62 (MATALASKLS…TILKCVDNSC (62 aa)), are a transit peptide targeting the mitochondrion. The disordered stretch occupies residues 148 to 175 (EKKGQNNSHGSKRKMEYNQPTGTRVFGP).

It belongs to the universal ribosomal protein uL14 family. In terms of assembly, part of the mitochondrial 50S ribosomal subunit. In terms of tissue distribution, mostly expressed in pistils and inflorescences, including floral organs and meristems, and, to a lower extent, in leaves.

The protein resides in the mitochondrion. Functionally, binds to 23S rRNA in mitochondrion. Required for the formation of the proximal region of the ovule primordium during floral organogenesis, thus participating in patterning and growth of ovule. Also regulates the initiation and/or maintenance of integument and embryo sac ontogenesis. Prevents inappropriate cell death in the young ovule. This is Large ribosomal subunit protein uL14my (HLL) from Arabidopsis thaliana (Mouse-ear cress).